The chain runs to 174 residues: RNA pyrophosphohydrolase (174 aa).

Residues glycine 6–lysine 149 enclose the Nudix hydrolase domain. The Nudix box motif lies at glycine 38–glycine 59.

It belongs to the Nudix hydrolase family. RppH subfamily. Requires a divalent metal cation as cofactor.

Functionally, accelerates the degradation of transcripts by removing pyrophosphate from the 5'-end of triphosphorylated RNA, leading to a more labile monophosphorylated state that can stimulate subsequent ribonuclease cleavage. This is RNA pyrophosphohydrolase from Shewanella oneidensis (strain ATCC 700550 / JCM 31522 / CIP 106686 / LMG 19005 / NCIMB 14063 / MR-1).